Here is a 361-residue protein sequence, read N- to C-terminus: MAALSLKGIRKSYDGKQHVLHGIDVEIADGEFVVLVGPSGCGKSTLLRMIAGLETVTDGEIAIGDRVVNALEPKDRDIAMVFQNYALYPHMTVAQNMGYGLKIRGIERATIDSRVAAAAKILELEPLLARRPRELSGGQRQRVAMGRAIVREPSVFLFDEPLSNLDAKLRVQMRLEIQRLHARLATTSVYVTHDQIEAMTLAQRVIVMNRGYAEQIGAPVDVYEKPETVFVAGFIGSPAMNLMHGRLSEDGATFAVAGGGPALPVAGAPGIGTTIATGRDWVLGVRPEHMTPQPGVAQASLPVDSCELLGADNLAHGRWGNHDVVVRLPHADRPARGTALGAALPAHRLHFFDPETGKRAG.

The 232-residue stretch at 4–235 folds into the ABC transporter domain; the sequence is LSLKGIRKSY…PETVFVAGFI (232 aa). 37-44 provides a ligand contact to ATP; the sequence is GPSGCGKS.

This sequence belongs to the ABC transporter superfamily. sn-glycerol-3-phosphate importer (TC 3.A.1.1.3) family. As to quaternary structure, the complex is composed of two ATP-binding proteins (UgpC), two transmembrane proteins (UgpA and UgpE) and a solute-binding protein (UgpB).

The protein resides in the cell inner membrane. The catalysed reaction is sn-glycerol 3-phosphate(out) + ATP + H2O = sn-glycerol 3-phosphate(in) + ADP + phosphate + H(+). Part of the ABC transporter complex UgpBAEC involved in sn-glycerol-3-phosphate (G3P) import. Responsible for energy coupling to the transport system. This is sn-glycerol-3-phosphate import ATP-binding protein UgpC from Burkholderia ambifaria (strain ATCC BAA-244 / DSM 16087 / CCUG 44356 / LMG 19182 / AMMD) (Burkholderia cepacia (strain AMMD)).